The following is a 464-amino-acid chain: Trigger factor (464 aa).

The 82-residue stretch at 162-243 (GDFVSIDLSA…VKSVKERELP (82 aa)) folds into the PPIase FKBP-type domain. Residues 431-464 (IDTSEFFGKRPSGDGAADEDADQADESTTADAGE) are disordered. The segment covering 446–455 (AADEDADQAD) has biased composition (acidic residues).

This sequence belongs to the FKBP-type PPIase family. Tig subfamily.

The protein localises to the cytoplasm. The enzyme catalyses [protein]-peptidylproline (omega=180) = [protein]-peptidylproline (omega=0). Its function is as follows. Involved in protein export. Acts as a chaperone by maintaining the newly synthesized protein in an open conformation. Functions as a peptidyl-prolyl cis-trans isomerase. The chain is Trigger factor from Mycobacterium avium (strain 104).